The following is a 39-amino-acid chain: Cytochrome b6-f complex subunit 5 (39 aa).

A helical transmembrane segment spans residues L5–A25.

It belongs to the PetG family. As to quaternary structure, the 4 large subunits of the cytochrome b6-f complex are cytochrome b6, subunit IV (17 kDa polypeptide, PetD), cytochrome f and the Rieske protein, while the 4 small subunits are PetG, PetL, PetM and PetN. The complex functions as a dimer.

It is found in the cellular thylakoid membrane. Functionally, component of the cytochrome b6-f complex, which mediates electron transfer between photosystem II (PSII) and photosystem I (PSI), cyclic electron flow around PSI, and state transitions. PetG is required for either the stability or assembly of the cytochrome b6-f complex. The chain is Cytochrome b6-f complex subunit 5 from Prochlorococcus marinus (strain MIT 9301).